We begin with the raw amino-acid sequence, 55 residues long: Bowman-Birk type proteinase inhibitor B1 (55 aa).

Intrachain disulfides connect Cys6–Cys53, Cys12–Cys17, Cys26–Cys33, and Cys30–Cys45.

The protein belongs to the Bowman-Birk serine protease inhibitor family. In terms of tissue distribution, expressed in bulb (at protein level).

Serine protease inhibitor. Weakly inhibits trypsin (Ki = 167 nM). Does not inhibit bacterial subtilisin or mamallian chymotrypsin. The chain is Bowman-Birk type proteinase inhibitor B1 from Hyacinthus orientalis (Common hyacinth).